We begin with the raw amino-acid sequence, 207 residues long: Protein GrpE (207 aa).

The interval 1–33 is disordered; the sequence is MTDPNGPKDIPEQSAEAAEPVVSKPYIMPDDPE.

The protein belongs to the GrpE family. Homodimer.

The protein resides in the cytoplasm. Participates actively in the response to hyperosmotic and heat shock by preventing the aggregation of stress-denatured proteins, in association with DnaK and GrpE. It is the nucleotide exchange factor for DnaK and may function as a thermosensor. Unfolded proteins bind initially to DnaJ; upon interaction with the DnaJ-bound protein, DnaK hydrolyzes its bound ATP, resulting in the formation of a stable complex. GrpE releases ADP from DnaK; ATP binding to DnaK triggers the release of the substrate protein, thus completing the reaction cycle. Several rounds of ATP-dependent interactions between DnaJ, DnaK and GrpE are required for fully efficient folding. This Rhodopseudomonas palustris (strain BisA53) protein is Protein GrpE.